The chain runs to 144 residues: Large ribosomal subunit protein uL16 (144 aa).

Residues 1–16 (MLQPKKTKFRRQQKGR) show a composition bias toward basic residues. A disordered region spans residues 1–22 (MLQPKKTKFRRQQKGRMKGEAQ).

This sequence belongs to the universal ribosomal protein uL16 family. Part of the 50S ribosomal subunit.

Binds 23S rRNA and is also seen to make contacts with the A and possibly P site tRNAs. In Parabacteroides distasonis (strain ATCC 8503 / DSM 20701 / CIP 104284 / JCM 5825 / NCTC 11152), this protein is Large ribosomal subunit protein uL16.